The primary structure comprises 461 residues: Bifunctional protein HldE (461 aa).

The tract at residues 1–311 (MKKILVVGDL…EEIALILNQT (311 aa)) is ribokinase. 191–194 (NRAE) lines the ATP pocket. Residue Asp260 is part of the active site. Positions 332–461 (FTNGCFDLLH…IEKIKRTHND (130 aa)) are cytidylyltransferase.

In the N-terminal section; belongs to the carbohydrate kinase PfkB family. This sequence in the C-terminal section; belongs to the cytidylyltransferase family. In terms of assembly, homodimer.

The catalysed reaction is D-glycero-beta-D-manno-heptose 7-phosphate + ATP = D-glycero-beta-D-manno-heptose 1,7-bisphosphate + ADP + H(+). The enzyme catalyses D-glycero-beta-D-manno-heptose 1-phosphate + ATP + H(+) = ADP-D-glycero-beta-D-manno-heptose + diphosphate. The protein operates within nucleotide-sugar biosynthesis; ADP-L-glycero-beta-D-manno-heptose biosynthesis; ADP-L-glycero-beta-D-manno-heptose from D-glycero-beta-D-manno-heptose 7-phosphate: step 1/4. It participates in nucleotide-sugar biosynthesis; ADP-L-glycero-beta-D-manno-heptose biosynthesis; ADP-L-glycero-beta-D-manno-heptose from D-glycero-beta-D-manno-heptose 7-phosphate: step 3/4. Catalyzes the phosphorylation of D-glycero-D-manno-heptose 7-phosphate at the C-1 position to selectively form D-glycero-beta-D-manno-heptose-1,7-bisphosphate. Its function is as follows. Catalyzes the ADP transfer from ATP to D-glycero-beta-D-manno-heptose 1-phosphate, yielding ADP-D-glycero-beta-D-manno-heptose. This chain is Bifunctional protein HldE, found in Helicobacter pylori (strain P12).